Here is a 1180-residue protein sequence, read N- to C-terminus: RecBCD enzyme subunit RecB (1180 aa).

Residues 2 to 450 (SDVAETLDPL…YTLDTNWRSA (449 aa)) form the UvrD-like helicase ATP-binding domain. The tract at residues 2–853 (SDVAETLDPL…KGEPQDAAGL (852 aa)) is ATPase, DNA-binding and helicase activity, interacts with RecC. 23 to 30 (ASAGTGKT) is a binding site for ATP. Residues 252–254 (IDR) mediate DNA binding. Trp447 is a binding site for ATP. Residues 480–746 (SAGKNQALRF…QIVTIHKSKG (267 aa)) form the UvrD-like helicase C-terminal domain. DNA-binding regions lie at residues 511 to 512 (VG), 560 to 561 (SR), and Arg761. The segment at 900-1180 (NWRVTSYSGL…MFAGMTLEEA (281 aa)) is nuclease activity, interacts with RecD and RecA. His956, Asp1067, Asp1080, and Tyr1081 together coordinate Mg(2+). The active-site For nuclease activity is Asp1080.

This sequence belongs to the helicase family. UvrD subfamily. Heterotrimer of RecB, RecC and RecD. All subunits contribute to DNA-binding. The C-terminus interacts with RecA. Interacts with YgbT (Cas1). As to quaternary structure, (Microbial infection) Lambda virus GamS protein interacts with the enzyme without displacing any of the subunits. The cofactor is Mg(2+).

It carries out the reaction Exonucleolytic cleavage (in the presence of ATP) in either 5'- to 3'- or 3'- to 5'-direction to yield 5'-phosphooligonucleotides.. The catalysed reaction is Couples ATP hydrolysis with the unwinding of duplex DNA by translocating in the 3'-5' direction.. It catalyses the reaction ATP + H2O = ADP + phosphate + H(+). After reacting with DNA bearing a Chi site the holoenzyme is disassembled and loses exonuclease activity, DNA unwinding and Chi-directed DNA cleavage; RecB remains complexed with ssDNA, which may prevent holoenzyme reassembly. High levels of Mg(2+) (13 mM MgCl(2+)) or incubation with DNase allows holoenzyme reassembly, suggesting it is DNA bound to RecB that prevents reassembly. Its activity is regulated as follows. (Microbial infection) RecBCD is inhibited by the lambda virus gam protein (both GamL and GamS isoforms); in vitro a short preincubation prior to adding DNA results in maximal inhibition. In terms of biological role, a helicase/nuclease that prepares dsDNA breaks (DSB) for recombinational DNA repair. Binds to DSBs and unwinds DNA via a rapid (&gt;1 kb/second) and highly processive (&gt;30 kb) ATP-dependent bidirectional helicase. Unwinds dsDNA until it encounters a Chi (crossover hotspot instigator, 5'-GCTGGTGG-3') sequence from the 3' direction. Cuts ssDNA a few nucleotides 3' to Chi site, by nicking one strand or switching the strand degraded (depending on the reaction conditions). The properties and activities of the enzyme are changed at Chi. The Chi-altered holoenzyme produces a long 3'-ssDNA overhang which facilitates RecA-binding to the ssDNA for homologous DNA recombination and repair. Holoenzyme degrades any linearized DNA that is unable to undergo homologous recombination. In the holoenzyme this subunit contributes ATPase, 3'-5' helicase, exonuclease activity and loads RecA onto ssDNA. The RecBC complex requires the RecD subunit for nuclease activity, but can translocate along ssDNA in both directions. The RecBCD complex does not unwind G-quadruplex DNA. Probably interacts with a component of retron Ec48 which moniters RecBCD stability; when RecB is missing or impaired the retron is activated and becomes toxic. This is RecBCD enzyme subunit RecB from Escherichia coli (strain K12).